Reading from the N-terminus, the 249-residue chain is Exosome complex component Rrp41 (249 aa).

Belongs to the RNase PH family. Rrp41 subfamily. As to quaternary structure, component of the archaeal exosome complex. Forms a hexameric ring-like arrangement composed of 3 Rrp41-Rrp42 heterodimers. The hexameric ring associates with a trimer of Rrp4 and/or Csl4 subunits.

The protein resides in the cytoplasm. Functionally, catalytic component of the exosome, which is a complex involved in RNA degradation. Has 3'-&gt;5' exoribonuclease activity. Can also synthesize heteromeric RNA-tails. The sequence is that of Exosome complex component Rrp41 from Thermococcus kodakarensis (strain ATCC BAA-918 / JCM 12380 / KOD1) (Pyrococcus kodakaraensis (strain KOD1)).